The sequence spans 1489 residues: Type-2 histone deacetylase 1 (1489 aa).

4 stretches are compositionally biased toward low complexity: residues 135-163, 190-259, 281-306, and 325-399; these read NNNN…SPSG, SNGN…SRNL, NIIN…TSTT, and SPTS…NINN. 5 disordered regions span residues 135 to 259, 281 to 556, 915 to 935, 955 to 1024, and 1151 to 1185; these read NNNN…SRNL, NIIN…NYQQ, NNNN…DDQL, NISK…RDRD, and STGI…GEQC. A compositionally biased stretch (polar residues) spans 400 to 430; sequence VANGTPRPSLQTSRLQGKLPSPQQYNTSPSH. Low complexity-rich tracts occupy residues 431-450, 486-553, 915-928, and 959-988; these read QQYP…PIQS, NNNN…NNSN, and NNNN…NNNN. Composition is skewed to basic and acidic residues over residues 989-1001 and 1010-1024; these read RNRD…ERDN and IEKE…RDRD. Low complexity predominate over residues 1158-1180; sequence STSTPITTTGTATVTPGSTTSST. Histidine 1232 serves as the catalytic Proton acceptor. The span at 1325–1335 shows a compositional bias: acidic residues; sequence EQNDYDDDDNN. Residues 1325–1374 form a disordered region; it reads EQNDYDDDDNNNDVNNNNNNNNNNNNNNNNNNNNKNNNNNNSNSITQQST. Residues 1336–1367 are compositionally biased toward low complexity; the sequence is NDVNNNNNNNNNNNNNNNNNNNNKNNNNNNSN.

This sequence belongs to the histone deacetylase family. HD type 2 subfamily.

It localises to the nucleus. It is found in the cytoplasm. It catalyses the reaction N(6)-acetyl-L-lysyl-[histone] + H2O = L-lysyl-[histone] + acetate. Its function is as follows. Responsible for the deacetylation of lysine residues on the N-terminal part of the core histones (H2A, H2B, H3 and H4). Histone deacetylation plays an important role in transcriptional regulation, cell cycle progression and developmental events. Histone deacetylases act via the formation of large multiprotein complexes. This chain is Type-2 histone deacetylase 1 (hdaD), found in Dictyostelium discoideum (Social amoeba).